The following is a 301-amino-acid chain: Probable alpha-L-glutamate ligase 1 (301 aa).

Residues 104 to 287 enclose the ATP-grasp domain; the sequence is LQLLSRKGIG…VTEPIVEYIE (184 aa). ATP is bound by residues K141, 178 to 179, D187, and 211 to 213; these read EY and RSN. Mg(2+)-binding residues include D248, E260, and N262. Positions 248, 260, and 262 each coordinate Mn(2+).

The protein belongs to the RimK family. Mg(2+) serves as cofactor. Requires Mn(2+) as cofactor.

The polypeptide is Probable alpha-L-glutamate ligase 1 (Shewanella oneidensis (strain ATCC 700550 / JCM 31522 / CIP 106686 / LMG 19005 / NCIMB 14063 / MR-1)).